The primary structure comprises 284 residues: MTAQLIDGNALSRQLRAEVAQRATALKARGTTPGLAVVLVGDNPASQVYVRNKVKACEDAGFHSVLEKYDASMTEAELLARVEALNNDPSIHGILVQLPLPAHIDDHKVIETISPLKDVDGFHVASAGALMVGEVGFKACTPYGCMKMLESIGMKDLRGKHAVVIGRSNIVGKPMAMMLLAANATVTICHSGTADLAAMTRQADIVVAAVGKRNVLTADMCKPGAVVIDVGMNRNDEGKLCGDVDFDGVKEVAGFITPVPGGVGPMTITMLLVNTMEAAERAAG.

NADP(+) contacts are provided by residues 166 to 168 and serine 191; that span reads GRS.

It belongs to the tetrahydrofolate dehydrogenase/cyclohydrolase family. Homodimer.

It carries out the reaction (6R)-5,10-methylene-5,6,7,8-tetrahydrofolate + NADP(+) = (6R)-5,10-methenyltetrahydrofolate + NADPH. The enzyme catalyses (6R)-5,10-methenyltetrahydrofolate + H2O = (6R)-10-formyltetrahydrofolate + H(+). It functions in the pathway one-carbon metabolism; tetrahydrofolate interconversion. Catalyzes the oxidation of 5,10-methylenetetrahydrofolate to 5,10-methenyltetrahydrofolate and then the hydrolysis of 5,10-methenyltetrahydrofolate to 10-formyltetrahydrofolate. The protein is Bifunctional protein FolD of Delftia acidovorans (strain DSM 14801 / SPH-1).